Reading from the N-terminus, the 623-residue chain is Glutathione import ATP-binding protein GsiA (623 aa).

ABC transporter domains lie at 15–269 and 314–564; these read VENL…RALL and LRVR…RKLL. ATP is bound by residues 49–56 and 357–364; these read GESGSGKS.

It belongs to the ABC transporter superfamily. Glutathione importer (TC 3.A.1.5.11) family. In terms of assembly, the complex is composed of two ATP-binding proteins (GsiA), two transmembrane proteins (GsiC and GsiD) and a solute-binding protein (GsiB).

Its subcellular location is the cell inner membrane. It carries out the reaction glutathione(out) + ATP + H2O = glutathione(in) + ADP + phosphate + H(+). Part of the ABC transporter complex GsiABCD involved in glutathione import. Responsible for energy coupling to the transport system. This Shigella sonnei (strain Ss046) protein is Glutathione import ATP-binding protein GsiA.